A 257-amino-acid chain; its full sequence is NAD-capped RNA hydrolase NudC (257 aa).

Arg-69 contacts substrate. Residues Cys-98 and Cys-101 each contribute to the Zn(2+) site. Substrate is bound at residue Glu-111. 2 residues coordinate Zn(2+): Cys-116 and Cys-119. Tyr-124 serves as a coordination point for substrate. A Nudix hydrolase domain is found at 125-248 (PQIAPCIIVA…TVARRLIEDT (124 aa)). Residues Ala-158, Glu-174, and Glu-178 each coordinate a divalent metal cation. The Nudix box motif lies at 159–180 (GFVEVGETLEQAVAREVMEESG). 192–199 (QPWPFPQS) is a binding site for substrate. Position 219 (Glu-219) interacts with a divalent metal cation. Position 241 (Ala-241) interacts with substrate.

The protein belongs to the Nudix hydrolase family. NudC subfamily. In terms of assembly, homodimer. The cofactor is Mg(2+). It depends on Mn(2+) as a cofactor. Zn(2+) is required as a cofactor.

The catalysed reaction is a 5'-end NAD(+)-phospho-ribonucleoside in mRNA + H2O = a 5'-end phospho-adenosine-phospho-ribonucleoside in mRNA + beta-nicotinamide D-ribonucleotide + 2 H(+). It catalyses the reaction NAD(+) + H2O = beta-nicotinamide D-ribonucleotide + AMP + 2 H(+). The enzyme catalyses NADH + H2O = reduced beta-nicotinamide D-ribonucleotide + AMP + 2 H(+). Its function is as follows. mRNA decapping enzyme that specifically removes the nicotinamide adenine dinucleotide (NAD) cap from a subset of mRNAs by hydrolyzing the diphosphate linkage to produce nicotinamide mononucleotide (NMN) and 5' monophosphate mRNA. The NAD-cap is present at the 5'-end of some mRNAs and stabilizes RNA against 5'-processing. Has preference for mRNAs with a 5'-end purine. Catalyzes the hydrolysis of a broad range of dinucleotide pyrophosphates. This Salmonella dublin (strain CT_02021853) protein is NAD-capped RNA hydrolase NudC.